The sequence spans 1110 residues: MKYNEKKTELSEVGKEVQQFWNDKKIFEKSVETREGNPTFTFYEGPPSANGTPGIHHVMGRTVKDIFCRFKTMQGFQVKRKGGWDTHGLPVELQVEKELGITKEDIGKKITVEQYNQKCREAVMKYKSQWDELTVKMGYWVDLEKPYITFENNYIESVWYLLKEFHQKKLLYKGYTIQPYSPAAGTGLSSHELNQPGTYKDVRDTSAVAQFKLKANPKFADNTYFLAWTTTPWTLPSNSALAVGENIEYVLVSTFNPYTFKPVQVILAKALLGKYFSEKAKDLSLEAYKDGDKLIPFKILQSYKGKDLVGIEYEQLMPYLQPETPAFRVIAGDFVSTEDGTGIVHIAPTFGADDARVAKLAGIPSIVTKDDRGNEYPLVDKRGRFTKEVTDFAGEYVKEAYLTDEEKEAERVKQGRDKYLSVDERISIKLKEANRAFKVEKYEHSYPHCWRTDKPVLYYPLDSWFIKTTAKKERLVELNKTINWKPESTGVGRFGNWLENLVDWNLSRSRYWGTPLPIWRSEDGSEEKCIGSIEELKTEIAKAQKAGIETATDIKDLHRPYVDNIVLVSDSGKPMKRELDLIDVWFDSGAMPYAQWHYPFENKELFNNNYPADFIAEGVDQTRGWFFTLHAISGMLYDKVAFKNVIANGLVLDKNGNKMSKRVGNVVNPFETIDKYGPDATRWYMITNAPPWDNLKFNLDGITEVQRRFFGTLQNTYSFFALYANLDNFTFAEAEIPLAQRTESDRWILSKLQSLVKDVADAYSDYEPTKAGRAIQDFVVDDLSNWYVRLNRKRFWKGEYNADKTAAYQTLYTCLETVAKLGAPIAPFYMDKLFSDLNQVSKKNAVESVHLADFPKVNEAFLDVELEERMSLAQRISSLVHSIRKAQTIKVRQPLSRILIPILQPHLKAQIQAVEDLIKNEVNIKAVEYIEDTSGVVIKTIKPNFKKLGKEYGAKLKEIGNAIAELRAEDITAIERNVFELKLADGTVIPITSEDVEIRSQDIPGWSVASEGGITVALDITLSDDLRKEGIARDVVNRVQNLRKDMGLEVQDKIRITIQKVDELINSALSANQEYICTETQAFSLELVEKLADGKEVEMDEQTLIMKIEK.

A 'HIGH' region motif is present at residues 47–57; sequence PSANGTPGIHH. The 'KMSKS' region signature appears at 658 to 662; it reads KMSKR. Lysine 661 provides a ligand contact to ATP.

Belongs to the class-I aminoacyl-tRNA synthetase family. IleS type 2 subfamily. As to quaternary structure, monomer. It depends on Zn(2+) as a cofactor.

Its subcellular location is the cytoplasm. It carries out the reaction tRNA(Ile) + L-isoleucine + ATP = L-isoleucyl-tRNA(Ile) + AMP + diphosphate. Functionally, catalyzes the attachment of isoleucine to tRNA(Ile). As IleRS can inadvertently accommodate and process structurally similar amino acids such as valine, to avoid such errors it has two additional distinct tRNA(Ile)-dependent editing activities. One activity is designated as 'pretransfer' editing and involves the hydrolysis of activated Val-AMP. The other activity is designated 'posttransfer' editing and involves deacylation of mischarged Val-tRNA(Ile). In Cytophaga hutchinsonii (strain ATCC 33406 / DSM 1761 / CIP 103989 / NBRC 15051 / NCIMB 9469 / D465), this protein is Isoleucine--tRNA ligase.